A 476-amino-acid chain; its full sequence is Neuropeptide receptor 18 (476 aa).

The Extracellular portion of the chain corresponds to 1–61 (MSSFYNEAKF…LSNHDNSSLM (61 aa)). Asn-43 and Asn-57 each carry an N-linked (GlcNAc...) asparagine glycan. The chain crosses the membrane as a helical span at residues 62 to 82 (LIAGFYALLFMFGTCGNAAIL). At 83–102 (AVVHHVKGQDPRSRHNTTLT) the chain is on the cytoplasmic side. A helical transmembrane segment spans residues 103–123 (YICILSIVDFLSMLPIPMTII). Over 124–139 (DQILGFWMFDTFACKL) the chain is Extracellular. Cys-137 and Cys-228 are disulfide-bonded. Residues 140 to 160 (FRLLEHIGKIFSTFILVAFSI) form a helical membrane-spanning segment. Over 161-179 (DRYCAVCHPLQVRVRNQRT) the chain is Cytoplasmic. A helical transmembrane segment spans residues 180-200 (VFVFLGIMFFVTCVMLSPILL). Over 201-236 (YAHSKELVMHEKVDLDQEVITRMHLYKCVDDLGREL) the chain is Extracellular. A helical transmembrane segment spans residues 237–257 (FVVFTLYSFVLAYLMPLLFMI). Over 258 to 291 (YFYYEMLIRLFKQANVIKQTLVGRRSGGEEKKLT) the chain is Cytoplasmic. The chain crosses the membrane as a helical span at residues 292-312 (IPVGHIAIYTLAICSFHFICW). Residues 313–334 (TPYWISILYSLYEELYQDTKST) lie on the Extracellular side of the membrane. The helical transmembrane segment at 335–355 (ASPPTYAFIYFMYGVHALPYI) threads the bilayer. Residues 356–476 (NSASNFILYG…ITPDTESVIL (121 aa)) lie on the Cytoplasmic side of the membrane.

Belongs to the G-protein coupled receptor 1 family. Expressed in sensory neurons including ASER.

The protein resides in the cell membrane. Probable receptor for neuropeptide ligand nlp-9 that plays a role in octopamine signaling and specifically, the octapamine inhibition of aversion responses in olfactory sensory neurons. In AWB olfactory sensory neurons, required for the detection of preferred food sources. This Caenorhabditis elegans protein is Neuropeptide receptor 18.